The chain runs to 146 residues: Probable trivalent organoarsenical cleaving enzyme (146 aa).

The VOC domain occupies 2–118 (KYVHVGVNVV…DGNEWEFFYT (117 aa)). Residues H5 and H62 each contribute to the Fe(2+) site. Roxarsone (III)-binding residues include C95 and C96. E114 is a binding site for Fe(2+).

To M.tuberculosis Rv2641. Fe(2+) is required as a cofactor.

It catalyses the reaction methylarsonous acid + AH2 + O2 = arsenite + methanol + A + H(+). The catalysed reaction is roxarsone (III) + AH2 + O2 = 4-hydroxy-3-nitrocyclohexa-2,5-dien-1-one + arsenite + A + H(+). It carries out the reaction nitarsone (III) + AH2 + O2 = 4-nitrocyclohexa-2,5-dien-1-one + arsenite + A + H(+). The enzyme catalyses 4-aminophenylarsonous acid + AH2 + O2 = 4-aminocyclohexa-2,5-dien-1-one + arsenite + A. Its function is as follows. Nonheme iron-dependent dioxygenase that can break carbon-arsenic bonds, playing a role in the detoxification of environmental organoarsenical compounds. Catalyzes the oxygen-dependent demethylation of highly toxic methylarsonous acid (MAs(III)) to arsenite, which can then be exported out of the cell. Can also cleave the C-As bond in several trivalent aromatic arsenicals, including roxarsone (III), nitarsone (III) and (4-aminophenyl)arsonous acid. Organoarsenical degradation by this enzyme is proposed to have a significant impact on the arsenic biogeocycle that maintains a balance between organic and inorganic species. The polypeptide is Probable trivalent organoarsenical cleaving enzyme (yqcK) (Bacillus subtilis (strain 168)).